A 138-amino-acid polypeptide reads, in one-letter code: Phospholipase A2 homolog crotoxin acid subunit CA (138 aa).

The N-terminal stretch at 1–37 is a signal peptide; sequence MRALWIVAVLLVGVEGSLVEFETLMMKIAGRSGISYY. Cystine bridges form between cysteine 42–cysteine 131, cysteine 44–cysteine 60, cysteine 59–cysteine 111, cysteine 65–cysteine 138, cysteine 66–cysteine 104, cysteine 73–cysteine 97, cysteine 91–cysteine 102, and cysteine 131–cysteine 138. The propeptide occupies 79–82; that stretch reads VYTY. The residue at position 84 (glutamine 84) is a Pyrrolidone carboxylic acid. Positions 119 to 124 are excised as a propeptide; sequence YDYKYL. Pyrrolidone carboxylic acid is present on glutamine 125.

This sequence belongs to the phospholipase A2 family. Group II subfamily. D49 sub-subfamily. As to quaternary structure, heterodimer of one of the acidic (CA1, CA2, CA3 or CA4) and one of the basic (CBa1, CBa2, CBb, CBc or CBd) subunits; non-covalently linked. The acidic subunit is non-toxic, without enzymatic activity and comprises 3 peptides that are cross-linked by 5 disulfide bridges. The basic subunit is toxic, has phospholipase A2 activity and is composed of a single chain. Multiple variants of each subunit give different crotoxin complexes that can be subdivided into 2 classes: (1) those of high toxicity, low PLA2 activity (CBb, CBc and CBd linked with high affinity to any CA) and high stability (K(d)=4.5 nM) and (2) those of moderate toxicity, high PLA2 activity (CBa2 linked with low affinity to any CA) and low stability (K(d)=25 nM). In terms of tissue distribution, expressed by the venom gland.

The protein resides in the secreted. Functionally, CAalpha-CAbeta-CAgamma: The acidic subunit of crotoxin (CA) is a heterotrimer of three disulfide-linked chains generated by post-translational maturation of a PLA2-like precursor. CA has no PLA2 activity and is not neurotoxic by itself, but plays several important functions in the crotoxin complex by increasing the lethal potency of the uncomplexed CB subunit. It acts by physically occluding the hydrophobic interfacial binding surface (IBS) of CB. This effect decreases the adsorption of CB to phospholipid membranes, targeting the crotoxin complex to reach the specific presynaptic receptor (R48) at the neuromuscular junction. It also prevents the formation of the reactive CB dimer. Moreover, the CA subunit inhibits the catalytic activity by partially masking the catalytic site of CB and inhibits its anticoagulant activity. Heterodimer CA-CB: Crotoxin is a potent presynaptic neurotoxin that possesses phospholipase A2 (PLA2) activity and exerts a lethal action by blocking neuromuscular transmission. It consists of a non-covalent association of a basic and weakly toxic PLA2 subunit (CBa2, CBb, CBc, or CBd), with a small acidic, non-enzymatic and non-toxic subunit (CA1, CA2, CA3 or CA4). The complex acts by binding to a specific 48-kDa protein (R48/CAPT) receptor located on presynaptic membranes, forming a transient ternary complex CA-CB-R48, followed by dissociation of the CA-CB complex and release of the CA subunit. At equilibrium, only the CB subunits remain associated with the specific crotoxin receptor. In addition to neurotoxicity, crotoxin has been found to exert myotoxicity, nephrotoxicity, and cardiovascular toxicity. Moreover, anti-inflammatory, immunomodulatory, anti-tumor and analgesic effects of crotoxin have also been reported. Its function is as follows. Found in the venom as a monomer and stabilized by one disulfide bond (Cys-131 and Cys-138). This peptide induces potent antinociceptive effects in acute and chronic pain models. This effect is mediated by the release of peripheral dynorphin A, an endogenous agonist of kappa-opioid receptors, and this release is dependent on cannabinoid receptor CB2 activation. This is Phospholipase A2 homolog crotoxin acid subunit CA from Crotalus durissus terrificus (South American rattlesnake).